The chain runs to 328 residues: Beta-ketoacyl-[acyl-carrier-protein] synthase III (328 aa).

Catalysis depends on residues cysteine 122 and histidine 255. Residues glutamine 256–arginine 260 are ACP-binding. Residue asparagine 285 is part of the active site.

It belongs to the thiolase-like superfamily. FabH family. Homodimer.

It is found in the cytoplasm. The catalysed reaction is malonyl-[ACP] + acetyl-CoA + H(+) = 3-oxobutanoyl-[ACP] + CO2 + CoA. It functions in the pathway lipid metabolism; fatty acid biosynthesis. Its function is as follows. Catalyzes the condensation reaction of fatty acid synthesis by the addition to an acyl acceptor of two carbons from malonyl-ACP. Catalyzes the first condensation reaction which initiates fatty acid synthesis and may therefore play a role in governing the total rate of fatty acid production. Possesses both acetoacetyl-ACP synthase and acetyl transacylase activities. Its substrate specificity determines the biosynthesis of branched-chain and/or straight-chain of fatty acids. This Polynucleobacter asymbioticus (strain DSM 18221 / CIP 109841 / QLW-P1DMWA-1) (Polynucleobacter necessarius subsp. asymbioticus) protein is Beta-ketoacyl-[acyl-carrier-protein] synthase III.